The chain runs to 189 residues: Elongation factor P (189 aa).

Residue Lys-34 is modified to N6-(3,6-diaminohexanoyl)-5-hydroxylysine.

The protein belongs to the elongation factor P family. Post-translationally, may be beta-lysylated on the epsilon-amino group of Lys-34 by the combined action of EpmA and EpmB, and then hydroxylated on the C5 position of the same residue by EpmC (if this protein is present). Lysylation is critical for the stimulatory effect of EF-P on peptide-bond formation. The lysylation moiety may extend toward the peptidyltransferase center and stabilize the terminal 3-CCA end of the tRNA. Hydroxylation of the C5 position on Lys-34 may allow additional potential stabilizing hydrogen-bond interactions with the P-tRNA.

The protein resides in the cytoplasm. The protein operates within protein biosynthesis; polypeptide chain elongation. Its function is as follows. Involved in peptide bond synthesis. Alleviates ribosome stalling that occurs when 3 or more consecutive Pro residues or the sequence PPG is present in a protein, possibly by augmenting the peptidyl transferase activity of the ribosome. Modification of Lys-34 is required for alleviation. The polypeptide is Elongation factor P (Acinetobacter baumannii (strain AB307-0294)).